We begin with the raw amino-acid sequence, 171 residues long: Co-chaperone protein HscB homolog (171 aa).

The J domain maps to 2 to 69; the sequence is NHFELFDLPV…DSRAAYLLSL (68 aa).

Belongs to the HscB family. Interacts with HscA and stimulates its ATPase activity.

Functionally, co-chaperone involved in the maturation of iron-sulfur cluster-containing proteins. Seems to help targeting proteins to be folded toward HscA. The polypeptide is Co-chaperone protein HscB homolog (Acinetobacter baylyi (strain ATCC 33305 / BD413 / ADP1)).